The sequence spans 158 residues: Trafficking protein particle complex subunit 6B (158 aa).

Belongs to the TRAPP small subunits family. BET3 subfamily. In terms of assembly, homodimer. Part of a TRAPP complex. Heterodimer with TRAPPC3. The heterodimer TRAPPC6B-TRAPPC3 interacts with TRAPPC1 likely providing a core for TRAPP complex formation.

It is found in the golgi apparatus. The protein resides in the cis-Golgi network. Its subcellular location is the endoplasmic reticulum. Functionally, component of a transport protein particle (TRAPP) complex that may function in specific stages of inter-organelle traffic. Specifically involved in the early development of neural circuitry, likely by controlling the frequency and amplitude of intracellular calcium transients implicated in the regulation of neuron differentiation and survival. This Bos taurus (Bovine) protein is Trafficking protein particle complex subunit 6B.